A 271-amino-acid polypeptide reads, in one-letter code: Formamidopyrimidine-DNA glycosylase (271 aa).

The Schiff-base intermediate with DNA role is filled by proline 2. Residue glutamate 3 is the Proton donor of the active site. The active-site Proton donor; for beta-elimination activity is the lysine 58. Positions 91, 110, and 152 each coordinate DNA. Residues 237–271 (NVYGRGGKACKKCRKPLTEKKLGQRTTVYCTHCQK) form an FPG-type zinc finger. The Proton donor; for delta-elimination activity role is filled by arginine 261.

It belongs to the FPG family. Monomer. The cofactor is Zn(2+).

It catalyses the reaction Hydrolysis of DNA containing ring-opened 7-methylguanine residues, releasing 2,6-diamino-4-hydroxy-5-(N-methyl)formamidopyrimidine.. It carries out the reaction 2'-deoxyribonucleotide-(2'-deoxyribose 5'-phosphate)-2'-deoxyribonucleotide-DNA = a 3'-end 2'-deoxyribonucleotide-(2,3-dehydro-2,3-deoxyribose 5'-phosphate)-DNA + a 5'-end 5'-phospho-2'-deoxyribonucleoside-DNA + H(+). In terms of biological role, involved in base excision repair of DNA damaged by oxidation or by mutagenic agents. Acts as a DNA glycosylase that recognizes and removes damaged bases. Has a preference for oxidized purines, such as 7,8-dihydro-8-oxoguanine (8-oxoG). Has AP (apurinic/apyrimidinic) lyase activity and introduces nicks in the DNA strand. Cleaves the DNA backbone by beta-delta elimination to generate a single-strand break at the site of the removed base with both 3'- and 5'-phosphates. The protein is Formamidopyrimidine-DNA glycosylase of Saccharophagus degradans (strain 2-40 / ATCC 43961 / DSM 17024).